Consider the following 192-residue polypeptide: Photosystem I assembly protein Ycf4 (192 aa).

The next 2 membrane-spanning stretches (helical) occupy residues 30-52 (YFWA…SSYL) and 72-94 (IAIG…AIAW).

It belongs to the Ycf4 family.

The protein resides in the cellular thylakoid membrane. Functionally, seems to be required for the assembly of the photosystem I complex. The protein is Photosystem I assembly protein Ycf4 of Thermosynechococcus vestitus (strain NIES-2133 / IAM M-273 / BP-1).